The following is a 202-amino-acid chain: Superoxide dismutase [Fe] (202 aa).

Positions 30, 78, 164, and 168 each coordinate Fe cation.

It belongs to the iron/manganese superoxide dismutase family. Homotetramer. Requires Fe cation as cofactor.

It carries out the reaction 2 superoxide + 2 H(+) = H2O2 + O2. Functionally, destroys superoxide anion radicals which are normally produced within the cells and which are toxic to biological systems. This is Superoxide dismutase [Fe] (sod) from Methanothermobacter marburgensis (strain ATCC BAA-927 / DSM 2133 / JCM 14651 / NBRC 100331 / OCM 82 / Marburg) (Methanobacterium thermoautotrophicum).